Here is a 372-residue protein sequence, read N- to C-terminus: 7-methylxanthosine synthase 1 (372 aa).

Residue Tyr-18 participates in S-adenosyl-L-homocysteine binding. The xanthosine site is built by Asn-21 and Asn-25. The S-adenosyl-L-homocysteine site is built by Cys-62, Asn-67, Asp-101, Leu-102, Ser-140, Phe-141, and Cys-157. Residue Tyr-158 participates in xanthosine binding. Residue Cys-159 participates in S-adenosyl-L-homocysteine binding. The xanthosine site is built by Gln-161 and Trp-162. Asn-179, Asp-261, Phe-263, and Asn-264 together coordinate Mg(2+). Xanthosine is bound by residues Ser-316, Tyr-321, and Tyr-356.

Belongs to the methyltransferase superfamily. Type-7 methyltransferase family. Mg(2+) is required as a cofactor. Expressed in stems, young leaves, floral buds, developing endosperm and immature fruits (grains). Detected in roots and old leaves, but not in mature fruits.

It catalyses the reaction xanthosine + S-adenosyl-L-methionine = 7-methylxanthosine + S-adenosyl-L-homocysteine. Its pathway is alkaloid biosynthesis. Functionally, involved in the biosynthesis of caffeine. Specific for xanthosine and could not use xanthosine 5'-monophosphate (XMP) as substrate. Catalyzes the 7-N-methylation activity of xanthosine, but does not have 1-N- or 3-N-methylation activity. This chain is 7-methylxanthosine synthase 1, found in Coffea arabica (Arabian coffee).